A 163-amino-acid chain; its full sequence is uncharacterized protein (163 aa).

This is an uncharacterized protein from Methanocaldococcus jannaschii (strain ATCC 43067 / DSM 2661 / JAL-1 / JCM 10045 / NBRC 100440) (Methanococcus jannaschii).